A 220-amino-acid polypeptide reads, in one-letter code: Fructose-6-phosphate aldolase 1 (220 aa).

Lys-85 acts as the Schiff-base intermediate with substrate in catalysis.

Belongs to the transaldolase family. Type 3A subfamily. In terms of assembly, homodecamer.

It localises to the cytoplasm. The catalysed reaction is beta-D-fructose 6-phosphate = dihydroxyacetone + D-glyceraldehyde 3-phosphate. In terms of biological role, catalyzes the reversible formation of fructose 6-phosphate from dihydroxyacetone and D-glyceraldehyde 3-phosphate via an aldolization reaction. The sequence is that of Fructose-6-phosphate aldolase 1 (fsaA) from Escherichia coli O157:H7.